A 247-amino-acid polypeptide reads, in one-letter code: 23S rRNA (guanosine-2'-O-)-methyltransferase RlmB (247 aa).

S-adenosyl-L-methionine-binding residues include G197, I217, and L226.

It belongs to the class IV-like SAM-binding methyltransferase superfamily. RNA methyltransferase TrmH family. RlmB subfamily.

It is found in the cytoplasm. It catalyses the reaction guanosine(2251) in 23S rRNA + S-adenosyl-L-methionine = 2'-O-methylguanosine(2251) in 23S rRNA + S-adenosyl-L-homocysteine + H(+). Specifically methylates the ribose of guanosine 2251 in 23S rRNA. The sequence is that of 23S rRNA (guanosine-2'-O-)-methyltransferase RlmB from Burkholderia sp.